A 63-amino-acid chain; its full sequence is Protease 2 small chain (63 aa).

One can recognise a Peptidase S8 domain in the interval 11 to 63 (QWGLSGTYGIRANTAWDNGYQGQGKIIAVVDTGITDHPDLLANRTSPLGYDFI).

It belongs to the peptidase S8 family. Heterodimer of a large and a small chain.

It is found in the secreted. This chain is Protease 2 small chain, found in Achromobacter lyticus.